Consider the following 378-residue polypeptide: Putative glutamate--cysteine ligase 2 (378 aa).

This sequence belongs to the glutamate--cysteine ligase type 2 family. YbdK subfamily.

It catalyses the reaction L-cysteine + L-glutamate + ATP = gamma-L-glutamyl-L-cysteine + ADP + phosphate + H(+). In terms of biological role, ATP-dependent carboxylate-amine ligase which exhibits weak glutamate--cysteine ligase activity. The sequence is that of Putative glutamate--cysteine ligase 2 from Pseudomonas paraeruginosa (strain DSM 24068 / PA7) (Pseudomonas aeruginosa (strain PA7)).